Here is a 323-residue protein sequence, read N- to C-terminus: Phospho-N-acetylmuramoyl-pentapeptide-transferase (323 aa).

A run of 9 helical transmembrane segments spans residues 12–32 (IVMA…IIIP), 58–78 (PTIG…VMVG), 84–104 (AMIA…DDLL), 120–140 (MILL…YIGT), 151–171 (INLG…VTNA), 177–197 (GLDG…GIIS), 200–220 (LGHI…LAFL), 229–250 (VFMG…ALIL), and 303–323 (KIVS…FASL).

This sequence belongs to the glycosyltransferase 4 family. MraY subfamily. The cofactor is Mg(2+).

The protein localises to the cell membrane. It catalyses the reaction UDP-N-acetyl-alpha-D-muramoyl-L-alanyl-gamma-D-glutamyl-meso-2,6-diaminopimeloyl-D-alanyl-D-alanine + di-trans,octa-cis-undecaprenyl phosphate = di-trans,octa-cis-undecaprenyl diphospho-N-acetyl-alpha-D-muramoyl-L-alanyl-D-glutamyl-meso-2,6-diaminopimeloyl-D-alanyl-D-alanine + UMP. It functions in the pathway cell wall biogenesis; peptidoglycan biosynthesis. Functionally, catalyzes the initial step of the lipid cycle reactions in the biosynthesis of the cell wall peptidoglycan: transfers peptidoglycan precursor phospho-MurNAc-pentapeptide from UDP-MurNAc-pentapeptide onto the lipid carrier undecaprenyl phosphate, yielding undecaprenyl-pyrophosphoryl-MurNAc-pentapeptide, known as lipid I. The chain is Phospho-N-acetylmuramoyl-pentapeptide-transferase from Clostridium perfringens (strain SM101 / Type A).